The sequence spans 700 residues: Polyribonucleotide nucleotidyltransferase (700 aa).

Mg(2+)-binding residues include aspartate 491 and aspartate 497. The region spanning 558-617 (PNYAVIEINPDKIRDVIGKGGATIRQLTEETGAVIDIDDAGTIRIFGENKAATKAAIAKI) is the KH domain. Positions 627 to 695 (GKTYEGTVAR…NRGRIKLTMK (69 aa)) constitute an S1 motif domain.

The protein belongs to the polyribonucleotide nucleotidyltransferase family. As to quaternary structure, component of the RNA degradosome, which is a multiprotein complex involved in RNA processing and mRNA degradation. Mg(2+) is required as a cofactor.

Its subcellular location is the cytoplasm. It catalyses the reaction RNA(n+1) + phosphate = RNA(n) + a ribonucleoside 5'-diphosphate. In terms of biological role, involved in mRNA degradation. Catalyzes the phosphorolysis of single-stranded polyribonucleotides processively in the 3'- to 5'-direction. The protein is Polyribonucleotide nucleotidyltransferase of Psychrobacter cryohalolentis (strain ATCC BAA-1226 / DSM 17306 / VKM B-2378 / K5).